The following is a 461-amino-acid chain: Acetylcholine receptor subunit alpha (461 aa).

An N-terminal signal peptide occupies residues 1–24; it reads MILCSYWHVGLVLLLFSCCGLVLG. Residues 25–234 lie on the Extracellular side of the membrane; it reads SEHETRLVAN…ITYHFIMQRI (210 aa). Intrachain disulfides connect cysteine 152–cysteine 166 and cysteine 216–cysteine 217. An N-linked (GlcNAc...) asparagine glycan is attached at asparagine 165. A run of 3 helical transmembrane segments spans residues 235–259, 267–285, and 301–320; these read PLYF…VFYL, MTLS…LVIV, and YMLF…VVVI. Residues 321–432 lie on the Cytoplasmic side of the membrane; that stretch reads NTHHRSPSTH…WKYVAMVIDH (112 aa). The chain crosses the membrane as a helical span at residues 433-451; the sequence is ILLCVFMLICIIGTVSVFA.

Belongs to the ligand-gated ion channel (TC 1.A.9) family. Acetylcholine receptor (TC 1.A.9.1) subfamily. Alpha-1/CHRNA1 sub-subfamily. In terms of assembly, pentamer of two alpha chains, and one each of the beta, delta, and gamma chains.

It is found in the postsynaptic cell membrane. The protein resides in the cell membrane. The enzyme catalyses K(+)(in) = K(+)(out). It catalyses the reaction Na(+)(in) = Na(+)(out). Functionally, upon acetylcholine binding, the AChR responds by an extensive change in conformation that affects all subunits and leads to opening of an ion-conducting channel across the plasma membrane. The protein is Acetylcholine receptor subunit alpha (CHRNA1) of Torpedo marmorata (Marbled electric ray).